Here is a 152-residue protein sequence, read N- to C-terminus: SKP1-like protein 10 (152 aa).

The tract at residues 94 to 152 (IMAANYLNIKSLLDLACQTVADMIKDNTVEHTRKFFNIENDYTHEEEEAVRRENQWGFE) is interaction with the F-box domain of F-box proteins.

Belongs to the SKP1 family. Part of a SCF (SKP1-cullin-F-box) protein ligase complex. Interacts with CPR1/CPR30. As to expression, expressed in young seedlings, roots, leaves, floral stems, inflorescences, and siliques.

It is found in the nucleus. Its pathway is protein modification; protein ubiquitination. Functionally, involved in ubiquitination and subsequent proteasomal degradation of target proteins. Together with CUL1, RBX1 and a F-box protein, it forms a SCF E3 ubiquitin ligase complex. The functional specificity of this complex depends on the type of F-box protein. In the SCF complex, it serves as an adapter that links the F-box protein to CUL1. This chain is SKP1-like protein 10 (ASK10), found in Arabidopsis thaliana (Mouse-ear cress).